The chain runs to 364 residues: MVFADYKQRVENGDLAVAWIGRNKLIPLHIEAEKTFHNQYGAFPHSEMIGKRYGEQIASTAKQGFIYLLQPTPELWTLALPHRTQIVYTPDIALIHQKLRITYGTRVIEAGTGSASMSHAISRTVGPLGRLFTFEYHATRYQTALQEFREHEMLIDVGGNTHLTHRDVCKDGFLDTEVKVDAIFLDLPAPWEAIPHLSNHVNHDKSTRICCFSPCIEQIQHSAEALRELGWCDIEMIEVDYKQWAARKSRIVHIDEAIDRLKEVKRRRIEGFERRKMRREQNLSSDAKVEDQDNDSMLGENKSSVSTETALKPVTNKRIREGDGNYEWTDVARVDSNLKSHTSYLLFAVHLPSQLDKQNQETGP.

Residues 114 to 116 (SAS), Glu135, Arg140, 167 to 168 (DV), and Asp186 contribute to the S-adenosyl-L-methionine site. Residues 280–309 (EQNLSSDAKVEDQDNDSMLGENKSSVSTET) are disordered.

It belongs to the class I-like SAM-binding methyltransferase superfamily. TRM61 family. As to quaternary structure, heterotetramer; composed of two copies of TRM6 and two copies of TRM61.

It localises to the nucleus. The enzyme catalyses adenosine(58) in tRNA + S-adenosyl-L-methionine = N(1)-methyladenosine(58) in tRNA + S-adenosyl-L-homocysteine + H(+). Functionally, catalytic subunit of tRNA (adenine-N(1)-)-methyltransferase, which catalyzes the formation of N(1)-methyladenine at position 58 (m1A58) in initiator methionyl-tRNA. The polypeptide is tRNA (adenine(58)-N(1))-methyltransferase catalytic subunit trm61 (cpd1) (Schizosaccharomyces pombe (strain 972 / ATCC 24843) (Fission yeast)).